Consider the following 560-residue polypeptide: Phenol regulator MopR (560 aa).

Phenol-binding residues include His-106 and Trp-134. Residues Cys-155, Glu-178, Cys-181, and Cys-189 each coordinate Zn(2+). A Sigma-54 factor interaction domain is found at 245 to 474 (AVGESVAYRK…LENLLERATL (230 aa)). ATP is bound by residues 273–280 (GETGVGKE) and 336–345 (AHGGTIFLDE).

In terms of assembly, homodimer.

Its activity is regulated as follows. Activity is triggered by phenol binding. Functionally, involved in the regulation of the phenol degradation pathway. Activates phenol hydroxylase expression in the presence of phenol. The protein is Phenol regulator MopR of Acinetobacter guillouiae (Acinetobacter genomosp. 11).